We begin with the raw amino-acid sequence, 290 residues long: Secreted chorismate mutase (290 aa).

The first 21 residues, 1-21 (MKLSVSIFVLLAVSAFGGGSA), serve as a signal peptide directing secretion. Residues 117 to 140 (VVLSRDTVLDKPVVGKGIFPIGRR) are KWL1-binding extensive loop region (ELR). Residues Asn-159 and Asn-208 are each glycosylated (N-linked (GlcNAc...) asparagine).

Homodimer. Forms a heterodimer with the host cytosolic chorismate mutase CM2. Interacts with the host kiwellin KWL1 which acts as a defense protein that protects maize from infection.

The protein localises to the secreted. It localises to the host cytoplasm. The protein resides in the host cytosol. It catalyses the reaction chorismate = prephenate. Contrary to classical chorismate mutases, CMU1 is not subject to allosteric regulation by tryptophan and tyrosine. Activity is decreased in a non-competitive and allosteric manner by the binding of the host defense kiwellin KWL1 which probably blocks substrate access to the active site of CMU1. Secreted chorismate mutase that is one component of a cocktail of effectors shaping the host metabolome and acting as virulence factors. The enzyme is taken up by plant cells, can spread to neighboring cells where it affects the biosynthesis of the plant immune signal salicylic acid by channelling chorismate into the phenylpropanoid pathway. Interferes with the activity of host cytosolic chorismate mutase CM2 through heterodimerization. This is Secreted chorismate mutase (CMU1) from Mycosarcoma maydis (Corn smut fungus).